An 843-amino-acid polypeptide reads, in one-letter code: Complement component C7 (843 aa).

The signal sequence occupies residues 1 to 22 (MKAMSLVFLVGLIGEFQVFSSA). A TSP type-1 1 domain is found at 27 to 80 (NCQWDSYAPWSECNGCTKTQTRRRPVAVYGQYGGHPCVGSTFETQSCEPTRGCP). Cystine bridges form between Cys28-Cys63, Cys39-Cys73, Cys42-Cys79, Cys85-Cys96, Cys91-Cys109, Cys103-Cys119, and Cys128-Cys165. C-linked (Man) tryptophan glycosylation is present at Trp36. An LDL-receptor class A domain is found at 83–121 (EGCGERFRCFSGQCISKSLVCNGDSDCEEDSADEDRCED). The tract at residues 105–142 (GDSDCEEDSADEDRCEDSESRPSCDLSKPPPNIELTGN) is disordered. A compositionally biased stretch (acidic residues) spans 107–120 (SDCEEDSADEDRCE). The 333-residue stretch at 124-456 (SRPSCDLSKP…EYLDEFDSCH (333 aa)) folds into the MACPF domain. N-linked (GlcNAc...) asparagine glycosylation is present at Asn202. 21 disulfides stabilise this stretch: Cys337–Cys353, Cys433–Cys560, Cys455–Cys505, Cys457–Cys473, Cys460–Cys475, Cys477–Cys486, Cys512–Cys545, Cys523–Cys535, Cys571–Cys613, Cys599–Cys626, Cys631–Cys673, Cys659–Cys688, Cys702–Cys713, Cys715–Cys750, Cys721–Cys743, Cys728–Cys763, Cys773–Cys782, Cys776–Cys789, Cys791–Cys825, Cys797–Cys818, and Cys805–Cys838. In terms of domain architecture, EGF-like spans 457–487 (CQPCQNGGMASVEGTQCQCHCKPNTFGVACE). A TSP type-1 2 domain is found at 500 to 549 (DGGWSCWSSWGPCAQGKKTRSRKCNNPPPSGGGKSCIGETSESRQCEDED). Residues Trp503, Trp506, and Trp509 are each glycosylated (C-linked (Man) tryptophan). Residues 516 to 539 (KKTRSRKCNNPPPSGGGKSCIGET) are disordered. CCP regions lie at residues 545-615 (CEDE…RCGE) and 616-693 (DLQW…RKEA). 2 Sushi domains span residues 569-628 (EFCP…HCQK) and 629-690 (IACV…QCVR). 2 factor I module (FIM) regions span residues 695-770 (LAKK…GSAE) and 771-843 (KACG…PEAP). An N-linked (GlcNAc...) asparagine glycan is attached at Asn754.

This sequence belongs to the complement C6/C7/C8/C9 family. Monomer or dimer; as a C5b-7 complex it can also form multimeric rosettes. Component of the membrane attack complex (MAC), composed of complement C5b, C6, C7, C8A, C8B, C8G and multiple copies of the pore-forming subunit C9. Post-translationally, C-, N- and O-glycosylated. O-glycosylated with core 1 or possibly core 8 glycans. Detected in plasma (at protein level). Bone marrow, heart, intestine, lung, spleen, kidney, liver and thymus.

Its subcellular location is the secreted. The protein localises to the target cell membrane. With respect to regulation, membrane attack complex (MAC) assembly is inhibited by CD59, thereby protecting self-cells from damage during complement activation. MAC assembly is also inhibited by clusterin (CLU) chaperones that inhibit polymerization of C9. In terms of biological role, component of the membrane attack complex (MAC), a multiprotein complex activated by the complement cascade, which inserts into a target cell membrane and forms a pore, leading to target cell membrane rupture and cell lysis. The MAC is initiated by proteolytic cleavage of C5 into complement C5b in response to the classical, alternative, lectin and GZMK complement pathways. The complement pathways consist in a cascade of proteins that leads to phagocytosis and breakdown of pathogens and signaling that strengthens the adaptive immune system. C7 serves as a membrane anchor. During MAC assembly, associates with C5b and C6 to form the C5b-7 complex, a key lipophilic precursor of the MAC complex, which associates with the outer leaflet and reduces the energy for membrane bending. The sequence is that of Complement component C7 (C7) from Sus scrofa (Pig).